We begin with the raw amino-acid sequence, 368 residues long: MASLSGSWRDAYKGMSSDNIKGLVLALSSSLFIGASFIVKKKGLKRAGASGLRAGSGGYSYLLEPLWWVGMITMIVGEIANFAAYAFAPAILVTPLGALSIIISAALAHVILHEKLHTFGLLGCVLCVVGSITIVLHAPQEQEIDSVLQVWNLATEPAFLLYAAAVVGAAIILIVQFVPQYGQSHVMVYIGVCSLVGSLSVMSVKALGIALKLTFSGMNQLIYPQTWVFTLIVLTCVITQMNYLNKALDTFNTAVVSPIYYVMFTSLTILASVIMFKDWDRQDGTQIVTELCGFVTILSGTFLLHKTKDMVDGSSSLGNLALRLPKQLEDSNGFEQEGIPLTLRRHECTKSPRPMRQFILPQDGPEAV.

The Extracellular segment spans residues methionine 1 to aspartate 18. The helical transmembrane segment at asparagine 19–valine 39 threads the bilayer. Over lysine 40 to leucine 66 the chain is Cytoplasmic. The chain crosses the membrane as a helical span at residues tryptophan 67 to phenylalanine 87. At alanine 88–alanine 90 the chain is on the extracellular side. The helical transmembrane segment at isoleucine 91–isoleucine 111 threads the bilayer. The Cytoplasmic portion of the chain corresponds to leucine 112–lysine 115. The chain crosses the membrane as a helical span at residues leucine 116–leucine 136. The Extracellular segment spans residues histidine 137–proline 157. Residues alanine 158–valine 178 form a helical membrane-spanning segment. The Cytoplasmic segment spans residues proline 179 to tyrosine 189. Residues isoleucine 190 to alanine 210 form a helical membrane-spanning segment. Residues leucine 211 to glutamine 220 are Extracellular-facing. A helical membrane pass occupies residues leucine 221–methionine 241. Residues asparagine 242–valine 255 are Cytoplasmic-facing. Residues valine 256–phenylalanine 276 form a helical membrane-spanning segment. At lysine 277–aspartate 283 the chain is on the extracellular side. A helical transmembrane segment spans residues glycine 284–leucine 304. The Cytoplasmic segment spans residues histidine 305–valine 368.

The protein belongs to the NIPA (TC 2.A.7) family. As to quaternary structure, homodimer.

The protein localises to the cell membrane. Its subcellular location is the early endosome. Its function is as follows. Acts as a Mg(2+) transporter. Can also transport other divalent cations such as Fe(2+), Sr(2+), Ba(2+), Mn(2+) and Co(2+) but to a much less extent than Mg(2+). The polypeptide is Probable magnesium transporter NIPA3 (Arabidopsis thaliana (Mouse-ear cress)).